The primary structure comprises 46 residues: Probable butyrate kinase (46 aa).

This sequence belongs to the acetokinase family.

The protein resides in the cytoplasm. It catalyses the reaction butanoate + ATP = butanoyl phosphate + ADP. The chain is Probable butyrate kinase (buk) from Geobacillus stearothermophilus (Bacillus stearothermophilus).